The following is a 230-amino-acid chain: UPF0494 membrane protein C1348.07 (230 aa).

The next 3 membrane-spanning stretches (helical) occupy residues 78–98 (WPLL…NFEV), 120–140 (IWGP…GLIY), and 148–168 (AIPL…VAMV).

This sequence belongs to the UPF0494 family.

It is found in the vacuole. Its subcellular location is the membrane. The sequence is that of UPF0494 membrane protein C1348.07 from Schizosaccharomyces pombe (strain 972 / ATCC 24843) (Fission yeast).